Consider the following 265-residue polypeptide: Cytochrome c oxidase subunit 3 (265 aa).

7 helical membrane-spanning segments follow: residues 16 to 36 (PWPL…VMYM), 41 to 61 (GGGT…FVWW), 85 to 105 (GIIL…WAFF), 138 to 158 (LILL…LAGL), 162 to 182 (AVYA…FQGI), 200 to 220 (FFLA…FLII), and 242 to 262 (AFYW…IYWW).

Belongs to the cytochrome c oxidase subunit 3 family. Component of the cytochrome c oxidase (complex IV, CIV), a multisubunit enzyme composed of a catalytic core of 3 subunits and several supernumerary subunits. The complex exists as a monomer or a dimer and forms supercomplexes (SCs) in the inner mitochondrial membrane with ubiquinol-cytochrome c oxidoreductase (cytochrome b-c1 complex, complex III, CIII).

The protein resides in the mitochondrion inner membrane. The catalysed reaction is 4 Fe(II)-[cytochrome c] + O2 + 8 H(+)(in) = 4 Fe(III)-[cytochrome c] + 2 H2O + 4 H(+)(out). Component of the cytochrome c oxidase, the last enzyme in the mitochondrial electron transport chain which drives oxidative phosphorylation. The respiratory chain contains 3 multisubunit complexes succinate dehydrogenase (complex II, CII), ubiquinol-cytochrome c oxidoreductase (cytochrome b-c1 complex, complex III, CIII) and cytochrome c oxidase (complex IV, CIV), that cooperate to transfer electrons derived from NADH and succinate to molecular oxygen, creating an electrochemical gradient over the inner membrane that drives transmembrane transport and the ATP synthase. Cytochrome c oxidase is the component of the respiratory chain that catalyzes the reduction of oxygen to water. Electrons originating from reduced cytochrome c in the intermembrane space (IMS) are transferred via the dinuclear copper A center (CU(A)) of subunit 2 and heme A of subunit 1 to the active site in subunit 1, a binuclear center (BNC) formed by heme A3 and copper B (CU(B)). The BNC reduces molecular oxygen to 2 water molecules using 4 electrons from cytochrome c in the IMS and 4 protons from the mitochondrial matrix. The polypeptide is Cytochrome c oxidase subunit 3 (COX3) (Marchantia polymorpha (Common liverwort)).